Here is a 249-residue protein sequence, read N- to C-terminus: MIEIESRELADIPVLHAYPVGQKDTPLPCVIFYHGFTSSSLVYSYFAVALAQAGLRVIMPDAPDHGSRFSGDAARRLNQFWQILLQSMQEFTTLRAAIAEENWLLDDRLAVGGASMGAMTALGITARHPTVRCTASMMGSGYFTSLARSLFPPLIPETAAQQNEFNNIVAPLAEWEATNHLEQLSDRPLLLWHGLDDDVVPADESLRLQQALSETGRDKLLTCSWQPGVRHRITPEALDAAVTFFRQHL.

Displays esterase activity toward palmitoyl-CoA and pNP-butyrate. The protein is Esterase YjfP (yjfP) of Escherichia coli (strain K12).